The following is a 375-amino-acid chain: Ferredoxin--NADP reductase, root-type isozyme, chloroplastic (375 aa).

Residues 1–60 constitute a chloroplast transit peptide; that stretch reads MAHSALSQVSVAVPLQTDSSFRRSTFKATSITFSDRSSWISMPPIDLKAAPSRNQHIVCM. Residues 91-219 form the FAD-binding FR-type domain; it reads KEPYTATIVS…TGPSGKIMLL (129 aa). FAD is bound by residues 151 to 154, 172 to 174, Y178, 193 to 195, and T235; these read RLYL, CVR, and VCS. R174 lines the NADP(+) pocket. NADP(+)-binding positions include T235, 266 to 267, 296 to 297, K306, 334 to 335, and E373; these read VA, SR, and GL.

Belongs to the ferredoxin--NADP reductase type 1 family. FAD is required as a cofactor.

Its subcellular location is the plastid. It is found in the chloroplast. The catalysed reaction is 2 reduced [2Fe-2S]-[ferredoxin] + NADP(+) + H(+) = 2 oxidized [2Fe-2S]-[ferredoxin] + NADPH. The protein operates within energy metabolism; photosynthesis. Its function is as follows. May play a key role in regulating the relative amounts of cyclic and non-cyclic electron flow to meet the demands of the plant for ATP and reducing power. Is involved in nitrate assimilation. The polypeptide is Ferredoxin--NADP reductase, root-type isozyme, chloroplastic (Nicotiana tabacum (Common tobacco)).